Consider the following 1010-residue polypeptide: Protein CROWDED NUCLEI 4 (1010 aa).

2 coiled-coil regions span residues 82–350 and 404–763; these read LLLL…LIQN and EKEH…NLER. Short sequence motifs (nuclear localization signal) lie at residues 445-452 and 679-686; these read NRKTTMLE and LKRLDAER. 3 disordered regions span residues 787 to 813, 839 to 937, and 966 to 994; these read GVST…PSSA, HYEE…TQTP, and DCSE…GINA. A compositionally biased stretch (basic and acidic residues) spans 849–863; sequence EKLKLESSRREEKAY. 2 stretches are compositionally biased toward polar residues: residues 883–893 and 912–921; these read NTSGDETSEPS and TQSVISSPQN.

This sequence belongs to the CRWN family. Core component of the LINC complex which is composed of inner nuclear membrane SUN domain-containing proteins coupled to outer nuclear membrane WIP proteins, the nucleoskeletal CRWN/LINC proteins, and, possibly, KAKU4. Binds to KAKU4. As to expression, expressed at low levels in roots, leaves, flowers and flower stalks.

It localises to the nucleus membrane. It is found in the nucleus. The protein localises to the nucleoplasm. Its subcellular location is the nucleus lamina. The protein resides in the cytoplasm. Its function is as follows. Component of SUN-protein-containing multivariate complexes also called LINC complexes which link the nucleoskeleton and cytoskeleton by providing versatile outer nuclear membrane attachment sites for cytoskeletal filaments. Required for nucleus structure organization (e.g. size and shape). Involved in the maintenance of interphase chromocenter integrity and organization. This is Protein CROWDED NUCLEI 4 from Arabidopsis thaliana (Mouse-ear cress).